A 97-amino-acid polypeptide reads, in one-letter code: Aspartyl/glutamyl-tRNA(Asn/Gln) amidotransferase subunit C (97 aa).

It belongs to the GatC family. In terms of assembly, heterotrimer of A, B and C subunits.

The catalysed reaction is L-glutamyl-tRNA(Gln) + L-glutamine + ATP + H2O = L-glutaminyl-tRNA(Gln) + L-glutamate + ADP + phosphate + H(+). The enzyme catalyses L-aspartyl-tRNA(Asn) + L-glutamine + ATP + H2O = L-asparaginyl-tRNA(Asn) + L-glutamate + ADP + phosphate + 2 H(+). Its function is as follows. Allows the formation of correctly charged Asn-tRNA(Asn) or Gln-tRNA(Gln) through the transamidation of misacylated Asp-tRNA(Asn) or Glu-tRNA(Gln) in organisms which lack either or both of asparaginyl-tRNA or glutaminyl-tRNA synthetases. The reaction takes place in the presence of glutamine and ATP through an activated phospho-Asp-tRNA(Asn) or phospho-Glu-tRNA(Gln). This chain is Aspartyl/glutamyl-tRNA(Asn/Gln) amidotransferase subunit C, found in Nostoc punctiforme (strain ATCC 29133 / PCC 73102).